The chain runs to 181 residues: MFKKFTREDVHSRSKVKSSIQRTLKAKLVKQYPKIEDVIDELIPKKSQIELIKCEDKIQLYSVDGEVLFFQKFDELIPSLKLVHKFPEAYPTVQVDRGAIKFVLSGANIMCPGLTSAGADLPPAPGYEKGTIVVINAENKENALAIGELMMGTEEIKSVNKGHSIELIHHLGDPLWNFSVE.

Residue methionine 1 is modified to N-acetylmethionine. The PUA domain maps to 90–172 (YPTVQVDRGA…HSIELIHHLG (83 aa)).

This sequence belongs to the TMA20 family. In terms of assembly, interacts with TMA22. Associates with ribosomal complexes.

The protein localises to the cytoplasm. Involved in translation. This is Translation machinery-associated protein 20 (TMA20) from Saccharomyces cerevisiae (strain ATCC 204508 / S288c) (Baker's yeast).